Reading from the N-terminus, the 177-residue chain is Probable chemoreceptor glutamine deamidase CheD (177 aa).

The protein belongs to the CheD family.

It catalyses the reaction L-glutaminyl-[protein] + H2O = L-glutamyl-[protein] + NH4(+). Probably deamidates glutamine residues to glutamate on methyl-accepting chemotaxis receptors (MCPs), playing an important role in chemotaxis. The polypeptide is Probable chemoreceptor glutamine deamidase CheD (Pseudomonas fluorescens (strain SBW25)).